A 244-amino-acid chain; its full sequence is ATP synthase subunit a, chloroplastic (244 aa).

The next 5 helical transmembrane spans lie at 35-55 (QVLITSWVVIAILLGSAVIAV), 92-112 (VPFIGTMFLFIFVSNWSGALL), 131-151 (INTTVALALLTSVAYFYAGLS), 196-216 (LVVVVLVSLVPSVVPIPVMFL), and 217-237 (GLFISGIQALIFATLAAAYIG).

This sequence belongs to the ATPase A chain family. In terms of assembly, F-type ATPases have 2 components, CF(1) - the catalytic core - and CF(0) - the membrane proton channel. CF(1) has five subunits: alpha(3), beta(3), gamma(1), delta(1), epsilon(1). CF(0) has four main subunits: a, b, b' and c.

It is found in the plastid. Its subcellular location is the chloroplast thylakoid membrane. In terms of biological role, key component of the proton channel; it plays a direct role in the translocation of protons across the membrane. This is ATP synthase subunit a, chloroplastic from Gossypium barbadense (Sea Island cotton).